The primary structure comprises 312 residues: Ribosomal protein L11 methyltransferase (312 aa).

Thr-160, Gly-181, Asp-203, and Asn-246 together coordinate S-adenosyl-L-methionine.

The protein belongs to the methyltransferase superfamily. PrmA family.

The protein localises to the cytoplasm. The enzyme catalyses L-lysyl-[protein] + 3 S-adenosyl-L-methionine = N(6),N(6),N(6)-trimethyl-L-lysyl-[protein] + 3 S-adenosyl-L-homocysteine + 3 H(+). In terms of biological role, methylates ribosomal protein L11. The sequence is that of Ribosomal protein L11 methyltransferase from Staphylococcus haemolyticus (strain JCSC1435).